The chain runs to 862 residues: Ubiquitin carboxyl-terminal hydrolase 13 (862 aa).

The segment at 182–290 (QASKHAKSLV…KHLAHFGIDM (109 aa)) adopts a UBP-type; degenerate zinc-finger fold. Zn(2+) contacts are provided by cysteine 206, cysteine 209, cysteine 226, and histidine 239. Residues 331–860 (TGMKNLGNSC…LGYIYFYHRI (530 aa)) enclose the USP domain. The active-site Nucleophile is the cysteine 340. 2 UBA domains span residues 647 to 688 (DIDE…IIAH) and 722 to 762 (QPPE…IFSH). Histidine 822 serves as the catalytic Proton acceptor.

This sequence belongs to the peptidase C19 family.

It catalyses the reaction Thiol-dependent hydrolysis of ester, thioester, amide, peptide and isopeptide bonds formed by the C-terminal Gly of ubiquitin (a 76-residue protein attached to proteins as an intracellular targeting signal).. Specifically inhibited by spautin-1 (specific and potent autophagy inhibitor-1), a derivative of MBCQ that binds to USP13 and inhibits deubiquitinase activity. In terms of biological role, deubiquitinase that mediates deubiquitination of target proteins and is involved in various processes such as autophagy and endoplasmic reticulum-associated degradation (ERAD). In Gallus gallus (Chicken), this protein is Ubiquitin carboxyl-terminal hydrolase 13 (USP13).